Reading from the N-terminus, the 715-residue chain is Coiled-coil domain-containing protein 170 (715 aa).

3 coiled-coil regions span residues 30 to 286 (VTRE…AGQQ), 360 to 418 (ESRD…LVSG), and 478 to 656 (ENKT…FREV). Residues 355–591 (MDSREESRDR…DLNKSRDQLE (237 aa)) are required for binding to microtubules and Golgi apparatus location.

In terms of assembly, binds Golgi-associated microtubules.

It localises to the golgi apparatus. In terms of biological role, plays a role in Golgi-associated microtubules organization and stabilization. The sequence is that of Coiled-coil domain-containing protein 170 from Homo sapiens (Human).